Consider the following 217-residue polypeptide: Uracil-DNA glycosylase (217 aa).

D62 acts as the Proton acceptor in catalysis.

Belongs to the uracil-DNA glycosylase (UDG) superfamily. UNG family.

It is found in the cytoplasm. It catalyses the reaction Hydrolyzes single-stranded DNA or mismatched double-stranded DNA and polynucleotides, releasing free uracil.. Its function is as follows. Excises uracil residues from the DNA which can arise as a result of misincorporation of dUMP residues by DNA polymerase or due to deamination of cytosine. This Streptococcus pyogenes serotype M1 protein is Uracil-DNA glycosylase.